Here is a 166-residue protein sequence, read N- to C-terminus: NADH-ubiquinone oxidoreductase chain 6 (166 aa).

Transmembrane regions (helical) follow at residues 1-21 (MMYFVYLLSILLVLGFMAFAS), 26-46 (IYGGLSLVLSGGVGCGIVVSL), 47-67 (GGSFLGLIVFLVYLGGMLVVF), 87-107 (VFTNLLIMVGMLGVIWYYFSG), and 139-159 (CGGWELIFSGWILFLTIFVVL).

Belongs to the complex I subunit 6 family. Core subunit of respiratory chain NADH dehydrogenase (Complex I) which is composed of 45 different subunits.

It is found in the mitochondrion inner membrane. The catalysed reaction is a ubiquinone + NADH + 5 H(+)(in) = a ubiquinol + NAD(+) + 4 H(+)(out). Its function is as follows. Core subunit of the mitochondrial membrane respiratory chain NADH dehydrogenase (Complex I) which catalyzes electron transfer from NADH through the respiratory chain, using ubiquinone as an electron acceptor. Essential for the catalytic activity and assembly of complex I. The polypeptide is NADH-ubiquinone oxidoreductase chain 6 (MT-ND6) (Ornithorhynchus anatinus (Duckbill platypus)).